A 212-amino-acid polypeptide reads, in one-letter code: Ras-related protein Rab-15 (212 aa).

Residues Ser17, Gly18, Val19, Gly20, Lys21, Thr22, Cys23, Ser35, Ser39, and Thr40 each coordinate GTP. Mg(2+) is bound at residue Thr22. 2 consecutive short sequence motifs (switch) follow at residues 31–45 (NEFH…GVDF) and 63–80 (DTAG…YYRR). Mg(2+) is bound by residues Thr40 and Asp63. Positions 66, 121, 122, 124, 151, and 152 each coordinate GTP. 2 S-geranylgeranyl cysteine lipidation sites follow: Cys210 and Cys212. At Cys212 the chain carries Cysteine methyl ester.

The protein belongs to the small GTPase superfamily. Rab family. In terms of assembly, the GTP bound form of RAB15 interacts with REP15. Interacts (GTP-bound form) with MICAL1, MICAL3, MICALCL, EHBP1 and EHBP1L1. Mg(2+) is required as a cofactor. Expressed predominantly in neural tissues.

The protein localises to the cell membrane. It carries out the reaction GTP + H2O = GDP + phosphate + H(+). Its activity is regulated as follows. Regulated by guanine nucleotide exchange factors (GEFs) which promote the exchange of bound GDP for free GTP. Regulated by GTPase activating proteins (GAPs) which increase the GTP hydrolysis activity. Inhibited by GDP dissociation inhibitors (GDIs). The small GTPases Rab are key regulators of intracellular membrane trafficking, from the formation of transport vesicles to their fusion with membranes. Rabs cycle between an inactive GDP-bound form and an active GTP-bound form that is able to recruit to membranes different sets of downstream effectors directly responsible for vesicle formation, movement, tethering and fusion. RAB15 may act in concert with RAB3A in regulating aspects of synaptic vesicle membrane flow within the nerve terminal. This is Ras-related protein Rab-15 from Rattus norvegicus (Rat).